The chain runs to 335 residues: Nucleoid-associated protein Ent638_2782 (335 aa).

Belongs to the YejK family.

It is found in the cytoplasm. It localises to the nucleoid. The protein is Nucleoid-associated protein Ent638_2782 of Enterobacter sp. (strain 638).